We begin with the raw amino-acid sequence, 290 residues long: 4-diphosphocytidyl-2-C-methyl-D-erythritol kinase (290 aa).

The active site involves K20. ATP is bound at residue 104 to 114; the sequence is PMGGGLGGGSS. D146 is a catalytic residue.

It belongs to the GHMP kinase family. IspE subfamily.

The enzyme catalyses 4-CDP-2-C-methyl-D-erythritol + ATP = 4-CDP-2-C-methyl-D-erythritol 2-phosphate + ADP + H(+). The protein operates within isoprenoid biosynthesis; isopentenyl diphosphate biosynthesis via DXP pathway; isopentenyl diphosphate from 1-deoxy-D-xylulose 5-phosphate: step 3/6. In terms of biological role, catalyzes the phosphorylation of the position 2 hydroxy group of 4-diphosphocytidyl-2C-methyl-D-erythritol. This is 4-diphosphocytidyl-2-C-methyl-D-erythritol kinase from Shewanella frigidimarina (strain NCIMB 400).